Reading from the N-terminus, the 351-residue chain is Protein RecA (351 aa).

68–75 is an ATP binding site; sequence GPESSGKT.

This sequence belongs to the RecA family.

The protein resides in the cytoplasm. Can catalyze the hydrolysis of ATP in the presence of single-stranded DNA, the ATP-dependent uptake of single-stranded DNA by duplex DNA, and the ATP-dependent hybridization of homologous single-stranded DNAs. It interacts with LexA causing its activation and leading to its autocatalytic cleavage. The protein is Protein RecA of Chloroflexus aggregans (strain MD-66 / DSM 9485).